Consider the following 155-residue polypeptide: MKIQLIAVGTKMPDWVKVGFEEYQRRFPKDMPFELIEIPAGKRGKNADIKRILEQEGKAMLSACGRGKVVTLDIPGKPWTTDQLARQLESWKNDGRDICLLIGGPEGLSPECKAAAEQSWSLSPLTLPHPLVRVVVAESVYRAWSLTTNHPYHRE.

S-adenosyl-L-methionine-binding positions include Leu72, Gly103, and 122–127 (LSPLTL).

Belongs to the RNA methyltransferase RlmH family. In terms of assembly, homodimer.

It localises to the cytoplasm. The enzyme catalyses pseudouridine(1915) in 23S rRNA + S-adenosyl-L-methionine = N(3)-methylpseudouridine(1915) in 23S rRNA + S-adenosyl-L-homocysteine + H(+). Specifically methylates the pseudouridine at position 1915 (m3Psi1915) in 23S rRNA. The polypeptide is Ribosomal RNA large subunit methyltransferase H (Mannheimia succiniciproducens (strain KCTC 0769BP / MBEL55E)).